A 309-amino-acid polypeptide reads, in one-letter code: uncharacterized protein (309 aa).

Residues 1–16 are compositionally biased toward basic residues; that stretch reads MAGNSRRRGAVRKAGT. The interval 1 to 70 is disordered; that stretch reads MAGNSRRRGA…AKRTEETETV (70 aa). Gly-261, Ile-281, and Leu-290 together coordinate S-adenosyl-L-methionine.

It belongs to the class IV-like SAM-binding methyltransferase superfamily. RNA methyltransferase TrmH family.

This is an uncharacterized protein from Mycolicibacterium paratuberculosis (strain ATCC BAA-968 / K-10) (Mycobacterium paratuberculosis).